We begin with the raw amino-acid sequence, 432 residues long: Glutamyl-tRNA reductase (432 aa).

Substrate-binding positions include 50–53 (TCNR), Ser-110, 115–117 (ETQ), and Gln-121. The Nucleophile role is filled by Cys-51. An NADP(+)-binding site is contributed by 190–195 (GAGEMG).

This sequence belongs to the glutamyl-tRNA reductase family. In terms of assembly, homodimer.

It catalyses the reaction (S)-4-amino-5-oxopentanoate + tRNA(Glu) + NADP(+) = L-glutamyl-tRNA(Glu) + NADPH + H(+). Its pathway is porphyrin-containing compound metabolism; protoporphyrin-IX biosynthesis; 5-aminolevulinate from L-glutamyl-tRNA(Glu): step 1/2. Functionally, catalyzes the NADPH-dependent reduction of glutamyl-tRNA(Glu) to glutamate 1-semialdehyde (GSA). In Nitratiruptor sp. (strain SB155-2), this protein is Glutamyl-tRNA reductase.